The following is a 259-amino-acid chain: tRNA (guanine-N(7)-)-methyltransferase (259 aa).

A disordered region spans residues 1-74 (MGHHGQMHAQ…PAEDPDRPGP (74 aa)). S-adenosyl-L-methionine contacts are provided by E91, E116, N143, and D166. D166 is a catalytic residue. Residues K170, D202, and 238–241 (TKYE) contribute to the substrate site.

Belongs to the class I-like SAM-binding methyltransferase superfamily. TrmB family.

The catalysed reaction is guanosine(46) in tRNA + S-adenosyl-L-methionine = N(7)-methylguanosine(46) in tRNA + S-adenosyl-L-homocysteine. It participates in tRNA modification; N(7)-methylguanine-tRNA biosynthesis. Its function is as follows. Catalyzes the formation of N(7)-methylguanine at position 46 (m7G46) in tRNA. The polypeptide is tRNA (guanine-N(7)-)-methyltransferase (Mycobacterium avium (strain 104)).